The chain runs to 570 residues: Transmembrane 7 superfamily member 3 (570 aa).

An N-terminal signal peptide occupies residues 1–21 (MGFLQLLVVAVLASEHRVAGA). N-linked (GlcNAc...) asparagine glycans are attached at residues asparagine 27, asparagine 61, asparagine 75, asparagine 87, and asparagine 264. 7 helical membrane-spanning segments follow: residues 296–313 (VFFTLFALLGFFICFFGH), 320–342 (LFFIGFIIMGFFFYILITRLTPI), 347–369 (NLILTAVTGSVGGMFLVAVWWRF), 371–393 (ILSICMLCVGLVLGFLISSVTFF), 408–430 (FWVTFSCIAILIPVVFMGCLRIL), 437–459 (VIGSYSVVLAIDSYWSTSLSYIT), and 479–501 (PFQTNDFIILAVWGMLAVSGITL).

In terms of tissue distribution, widely expressed. Highly expressed in kidney and pancreas.

Its subcellular location is the cell membrane. Involved in the inhibition of cytokine-induced death of pancreatic beta cells. Involved in the promotion of insulin secretion from pancreatic beta cells. Is a downstream transcriptional target of p53/TP53, and acts as a pro-survival homeostatic factor that attenuates the development of cellular stress. Maintains protein homeostasis and promotes cell survival through attenuation of endoplasmic reticulum (ER) stress and the subsequent induction of unfolded protein response (UPR). The sequence is that of Transmembrane 7 superfamily member 3 (TM7SF3) from Homo sapiens (Human).